The primary structure comprises 238 residues: Endothelin-3 (238 aa).

The first 16 residues, 1 to 16, serve as a signal peptide directing secretion; that stretch reads MEPGLWLLFGLTVTSA. Positions 17–94 are excised as a propeptide; sequence AGFVPCSQSG…AEGAPEHHRS (78 aa). Positions 24-89 are disordered; sequence QSGDAGRRGV…GQEQAAEGAP (66 aa). 2 disulfide bridges follow: C97-C111 and C99-C107. A propeptide spanning residues 118–238 is cleaved from the precursor; that stretch reads INTPEQTVPY…PRCLFQEGAP (121 aa). Positions 159 to 173 are endothelin-like; it reads CACVGRYDKACLHFC. The tract at residues 183 to 219 is disordered; that stretch reads SRTAEKTDKEEEGKVEVKDQQSKQALDLHHPKLMPGS. Basic and acidic residues predominate over residues 185–212; it reads TAEKTDKEEEGKVEVKDQQSKQALDLHH.

The protein belongs to the endothelin/sarafotoxin family. Expressed in trophoblasts and placental stem villi vessels, but not in cultured placental smooth muscle cells.

The protein resides in the secreted. In terms of biological role, endothelins are endothelium-derived vasoconstrictor peptides. The chain is Endothelin-3 (EDN3) from Homo sapiens (Human).